We begin with the raw amino-acid sequence, 244 residues long: uncharacterized protein (244 aa).

The signal sequence occupies residues 1–18 (MQFSVLCKFLLLVTAVMA). Residues 19 to 223 (QTEYTPGFTT…TTIPSSAVHY (205 aa)) lie on the Lumenal side of the membrane. 2 stretches are compositionally biased toward low complexity: residues 55–65 (ETSTHSVTSTN) and 75–128 (TSHN…TTHV). Positions 55–128 (ETSTHSVTST…TTVVPPTTHV (74 aa)) are disordered. Residues 224–244 (ASPSGLLALVVMLISAFAFLA) traverse the membrane as a helical segment.

It is found in the endoplasmic reticulum membrane. This is an uncharacterized protein from Schizosaccharomyces pombe (strain 972 / ATCC 24843) (Fission yeast).